Here is a 354-residue protein sequence, read N- to C-terminus: Acyl-CoA-binding domain-containing protein 2 (354 aa).

The chain crosses the membrane as a helical; Signal-anchor span at residues 11–31 (VILGLIFSYLLAKLISIVVTF). The tract at residues 75–96 (AEQGSSRSDSVAGDDSEEDDDW) is disordered. Residues 86-96 (AGDDSEEDDDW) are compositionally biased toward acidic residues. The 91-residue stretch at 104-194 (LDEAFSAATL…VTQLYPTWLD (91 aa)) folds into the ACB domain. Residues 136 to 140 (YGLYK), lysine 162, and tyrosine 181 contribute to the an acyl-CoA site. ANK repeat units follow at residues 265–294 (EGRT…DVNA) and 298–327 (EGQT…NTAA).

The protein belongs to the ACBP family. Interacts (via ankyrin repeats) with HIPP26 and the ethylene-responsive element-binding proteins RAP2-3/EBP and RAP2-12. Interacts with CSE. In terms of tissue distribution, mostly expressed in roots and flowers, and, to a lower extent, in stems, pods and leaves (at protein level).

Its subcellular location is the cell membrane. The protein localises to the endoplasmic reticulum membrane. It is found in the peroxisome membrane. Its function is as follows. Binds medium- and long-chain acyl-CoA esters with very high affinity. Can interact in vitro with palmitoyl-CoA, but not with oleoyl-CoA. Binds to lead ions (Pb). May function as an intracellular carrier of acyl-CoA esters. Required for proper phospholipid and, to a lower extent, galactolipid composition. The chain is Acyl-CoA-binding domain-containing protein 2 (ACBP2) from Arabidopsis thaliana (Mouse-ear cress).